The primary structure comprises 259 residues: L-erythrulose-1-phosphate isomerase (259 aa).

The active-site Electrophile is H102. E174 functions as the Proton acceptor in the catalytic mechanism.

Belongs to the triosephosphate isomerase family.

The catalysed reaction is L-erythrulose 1-phosphate = D-erythrulose 4-phosphate. It participates in carbohydrate metabolism. In terms of biological role, involved in catabolism of D-apiose. Catalyzes the isomerization of L-erythrulose 1-phosphate to D-erythrulose 4-phosphate. The chain is L-erythrulose-1-phosphate isomerase from Pectobacterium atrosepticum (strain SCRI 1043 / ATCC BAA-672) (Erwinia carotovora subsp. atroseptica).